The primary structure comprises 800 residues: Phenylalanine--tRNA ligase beta subunit (800 aa).

Residues Thr39 to Leu154 form the tRNA-binding domain. Positions Ala408 to Ser483 constitute a B5 domain. Mg(2+) is bound by residues Asp461, Asp467, Glu470, and Glu471. The FDX-ACB domain maps to Pro708–Arg800.

The protein belongs to the phenylalanyl-tRNA synthetase beta subunit family. Type 1 subfamily. In terms of assembly, tetramer of two alpha and two beta subunits. It depends on Mg(2+) as a cofactor.

Its subcellular location is the cytoplasm. The catalysed reaction is tRNA(Phe) + L-phenylalanine + ATP = L-phenylalanyl-tRNA(Phe) + AMP + diphosphate + H(+). The sequence is that of Phenylalanine--tRNA ligase beta subunit from Staphylococcus aureus (strain MSSA476).